A 320-amino-acid chain; its full sequence is Ferrochelatase (320 aa).

Fe cation is bound by residues histidine 194 and glutamate 275.

The protein belongs to the ferrochelatase family.

Its subcellular location is the cytoplasm. It carries out the reaction heme b + 2 H(+) = protoporphyrin IX + Fe(2+). Its pathway is porphyrin-containing compound metabolism; protoheme biosynthesis; protoheme from protoporphyrin-IX: step 1/1. Its function is as follows. Catalyzes the ferrous insertion into protoporphyrin IX. In Klebsiella pneumoniae (strain 342), this protein is Ferrochelatase.